We begin with the raw amino-acid sequence, 448 residues long: Trigger factor (448 aa).

A PPIase FKBP-type domain is found at 172–257; that stretch reads GDRVTVDFVG…MKKIEWPHLP (86 aa).

The protein belongs to the FKBP-type PPIase family. Tig subfamily.

The protein resides in the cytoplasm. The enzyme catalyses [protein]-peptidylproline (omega=180) = [protein]-peptidylproline (omega=0). Involved in protein export. Acts as a chaperone by maintaining the newly synthesized protein in an open conformation. Functions as a peptidyl-prolyl cis-trans isomerase. This is Trigger factor from Burkholderia ambifaria (strain ATCC BAA-244 / DSM 16087 / CCUG 44356 / LMG 19182 / AMMD) (Burkholderia cepacia (strain AMMD)).